The primary structure comprises 298 residues: DDRGK domain-containing protein 1 (298 aa).

Residues 1–2 (ME) lie on the Lumenal side of the membrane. The chain crosses the membrane as a helical span at residues 3–23 (EIFALIVSMILIVAVIPLFFW). The Cytoplasmic segment spans residues 24 to 298 (KRRRDARSRE…ISGMEEISVS (275 aa)). The disordered stretch occupies residues 31-155 (SREEVAEPPQ…EEEKARQAKE (125 aa)). Over residues 101–155 (KRQEREAQRQAEEATRESRNTKQDWYAEMRRKKDEEREAEELKLEEEEKARQAKE) the composition is skewed to basic and acidic residues.

Belongs to the DDRGK1 family.

The protein resides in the endoplasmic reticulum membrane. Functionally, substrate adapter for ufmylation, the covalent attachment of the ubiquitin-like modifier UFM1 to substrate proteins. In Arabidopsis thaliana (Mouse-ear cress), this protein is DDRGK domain-containing protein 1.